The following is a 358-amino-acid chain: Phospho-N-acetylmuramoyl-pentapeptide-transferase (358 aa).

Helical transmembrane passes span 3-23 (QILF…PALI), 54-74 (GVAI…IGIA), 84-104 (ALLV…DDFI), 114-134 (LTAA…GVLA), 156-176 (ITTV…VVVA), 187-207 (LDGL…IITF), 231-251 (LALV…WNAA), 255-275 (IFMG…LSIT), 283-303 (VVIG…VAVF), and 330-350 (VIIR…GLFY).

It belongs to the glycosyltransferase 4 family. MraY subfamily. The cofactor is Mg(2+).

The protein localises to the cell membrane. It carries out the reaction UDP-N-acetyl-alpha-D-muramoyl-L-alanyl-gamma-D-glutamyl-meso-2,6-diaminopimeloyl-D-alanyl-D-alanine + di-trans,octa-cis-undecaprenyl phosphate = di-trans,octa-cis-undecaprenyl diphospho-N-acetyl-alpha-D-muramoyl-L-alanyl-D-glutamyl-meso-2,6-diaminopimeloyl-D-alanyl-D-alanine + UMP. It functions in the pathway cell wall biogenesis; peptidoglycan biosynthesis. Catalyzes the initial step of the lipid cycle reactions in the biosynthesis of the cell wall peptidoglycan: transfers peptidoglycan precursor phospho-MurNAc-pentapeptide from UDP-MurNAc-pentapeptide onto the lipid carrier undecaprenyl phosphate, yielding undecaprenyl-pyrophosphoryl-MurNAc-pentapeptide, known as lipid I. The polypeptide is Phospho-N-acetylmuramoyl-pentapeptide-transferase (Nocardia farcinica (strain IFM 10152)).